The sequence spans 268 residues: Thiazole synthase (268 aa).

The active-site Schiff-base intermediate with DXP is lysine 100. 1-deoxy-D-xylulose 5-phosphate contacts are provided by residues glycine 161, 187-188, and 209-210; these read AG and NT. The segment at 248–268 is disordered; that stretch reads ASPSSPAEGMFTGTQHPAANS. The segment covering 259 to 268 has biased composition (polar residues); the sequence is TGTQHPAANS.

It belongs to the ThiG family. As to quaternary structure, homotetramer. Forms heterodimers with either ThiH or ThiS.

It localises to the cytoplasm. It carries out the reaction [ThiS sulfur-carrier protein]-C-terminal-Gly-aminoethanethioate + 2-iminoacetate + 1-deoxy-D-xylulose 5-phosphate = [ThiS sulfur-carrier protein]-C-terminal Gly-Gly + 2-[(2R,5Z)-2-carboxy-4-methylthiazol-5(2H)-ylidene]ethyl phosphate + 2 H2O + H(+). Its pathway is cofactor biosynthesis; thiamine diphosphate biosynthesis. Its function is as follows. Catalyzes the rearrangement of 1-deoxy-D-xylulose 5-phosphate (DXP) to produce the thiazole phosphate moiety of thiamine. Sulfur is provided by the thiocarboxylate moiety of the carrier protein ThiS. In vitro, sulfur can be provided by H(2)S. This Nitrosomonas europaea (strain ATCC 19718 / CIP 103999 / KCTC 2705 / NBRC 14298) protein is Thiazole synthase.